Consider the following 543-residue polypeptide: Probable ubiquitin-conjugating enzyme E2 26 (543 aa).

Residues 1–21 are disordered; it reads MEPDVVEIPPPPLIASGSRTR. Residues 271-431 form the UBC core domain; sequence NWVKKVQADW…VFLLSLKTMV (161 aa). Cys357 serves as the catalytic Glycyl thioester intermediate. A disordered region spans residues 514 to 543; the sequence is LAEKPEPPMSNANTENQSKKKTRKRSRSSR. The span at 532 to 543 shows a compositional bias: basic residues; it reads KKKTRKRSRSSR.

The protein belongs to the ubiquitin-conjugating enzyme family.

It catalyses the reaction S-ubiquitinyl-[E1 ubiquitin-activating enzyme]-L-cysteine + [E2 ubiquitin-conjugating enzyme]-L-cysteine = [E1 ubiquitin-activating enzyme]-L-cysteine + S-ubiquitinyl-[E2 ubiquitin-conjugating enzyme]-L-cysteine.. It participates in protein modification; protein ubiquitination. Functionally, accepts the ubiquitin from the E1 complex and catalyzes its covalent attachment to other proteins. The sequence is that of Probable ubiquitin-conjugating enzyme E2 26 (UBC26) from Arabidopsis thaliana (Mouse-ear cress).